A 259-amino-acid polypeptide reads, in one-letter code: 1,2-dihydroxy-1,2-dihydronaphthalene dehydrogenase (259 aa).

Serine 8–serine 32 serves as a coordination point for NAD(+). Serine 140 lines the substrate pocket. Tyrosine 153 acts as the Proton acceptor in catalysis.

It belongs to the short-chain dehydrogenases/reductases (SDR) family.

The catalysed reaction is (1R,2S)-1,2-dihydronaphthalene-1,2-diol + NAD(+) = naphthalene-1,2-diol + NADH + H(+). The enzyme catalyses cis-1,2-dihydroxy-1,2-dihydrodibenzothiophene + NAD(+) = 1,2-dihydroxydibenzothiophene + NADH + H(+). The protein operates within aromatic compound metabolism; naphthalene degradation. Catalyzes the oxidation of naphthalene dihydrodiol into 1,2-dihydroxynaphthalene. In Pseudomonas putida (Arthrobacter siderocapsulatus), this protein is 1,2-dihydroxy-1,2-dihydronaphthalene dehydrogenase (nahB).